The sequence spans 43 residues: Protein PsbN (43 aa).

A helical transmembrane segment spans residues 7–29 (VAIFLSGLLVSFTGYALYTAFGQ).

Belongs to the PsbN family.

It localises to the plastid. The protein resides in the chloroplast thylakoid membrane. Functionally, may play a role in photosystem I and II biogenesis. This chain is Protein PsbN, found in Draba nemorosa (Woodland whitlowgrass).